The following is a 290-amino-acid chain: Transposon Ty3-I Gag polyprotein (290 aa).

S2 is subject to N-acetylserine. The CCHC-type zinc-finger motif lies at 265–282 (RLCFYCKKEGHRLNECRA).

The protein resides in the cytoplasm. Functionally, capsid protein (CA) is the structural component of the virus-like particle (VLP), forming the shell that encapsulates the retrotransposons dimeric RNA genome. Nucleocapsid protein p9 (NC) forms the nucleocore that coats the retro-elements dimeric RNA. Binds these RNAs through its zinc fingers. Promotes primer tRNA(i)-Met annealing to the multipartite primer-binding site (PBS), dimerization of Ty3 RNA and initiation of reverse transcription. This Saccharomyces cerevisiae (strain ATCC 204508 / S288c) (Baker's yeast) protein is Transposon Ty3-I Gag polyprotein (TY3A-I).